The following is a 252-amino-acid chain: Fatty acid elongase 4 (252 aa).

The chain crosses the membrane as a helical span at residues 25–45; that stretch reads LVSWHALVLGHLLYLFVVFVM. N-linked (GlcNAc...) asparagine glycosylation occurs at Asn56. The chain crosses the membrane as a helical span at residues 60–80; sequence VLVVYNVLQICLSAAMAINLS. A glycan (N-linked (GlcNAc...) asparagine) is linked at Asn89. The next 5 membrane-spanning stretches (helical) occupy residues 100–120, 127–147, 150–170, 187–207, and 214–234; these read FWMFVHYCSKYIDMLDTVFIL, QLSFLHVYHHCTIGLIWGILL, GLANGTAFFGTWINSSVHFLM, FLLTKIQMLQFSLCILHAILV, and FTLGWNLLQLLYNASLLVLFL. The HxxHH motif signature appears at 132-136; that stretch reads HVYHH. His135 acts as the Nucleophile in catalysis.

Belongs to the ELO family.

It localises to the membrane. It catalyses the reaction (5Z,8Z,11Z,14Z)-eicosatetraenoyl-CoA + malonyl-CoA + H(+) = (7Z,10Z,13Z,16Z)-3-oxodocosatetraenoyl-CoA + CO2 + CoA. The protein operates within lipid metabolism; fatty acid biosynthesis. In terms of biological role, involved in the synthesis of fatty acids. Elongates arachidonate and other C20 polyunsaturated fatty acids (PUFAs) with a preference for n-6 PUFAs. Not involved in fatty acid synthesis up to C18. The polypeptide is Fatty acid elongase 4 (Trypanosoma brucei brucei (strain 927/4 GUTat10.1)).